A 281-amino-acid polypeptide reads, in one-letter code: Alcohol dehydrogenase-related 31 kDa protein (281 aa).

NAD(+) is bound at residue 11-34; it reads YVADCGGIALETSKVLMTKNIAKL. Ser139 is a substrate binding site. Tyr152 acts as the Proton acceptor in catalysis.

Belongs to the short-chain dehydrogenases/reductases (SDR) family.

The protein is Alcohol dehydrogenase-related 31 kDa protein (Adhr) of Drosophila ambigua (Fruit fly).